Consider the following 673-residue polypeptide: Exoribonuclease 2 (673 aa).

Residues 191-516 (RTDLTATPFF…NHRLLKAVIA (326 aa)) form the RNB domain. In terms of domain architecture, S1 motif spans 562-645 (DKVFNAEIID…ETRSLIAKPA (84 aa)). Residues 650 to 673 (PGPAPVAPTSEADATPADEAPKAE) are disordered.

Belongs to the RNR ribonuclease family. RNase II subfamily.

It localises to the cytoplasm. It catalyses the reaction Exonucleolytic cleavage in the 3'- to 5'-direction to yield nucleoside 5'-phosphates.. In terms of biological role, involved in mRNA degradation. Hydrolyzes single-stranded polyribonucleotides processively in the 3' to 5' direction. The chain is Exoribonuclease 2 from Aeromonas hydrophila subsp. hydrophila (strain ATCC 7966 / DSM 30187 / BCRC 13018 / CCUG 14551 / JCM 1027 / KCTC 2358 / NCIMB 9240 / NCTC 8049).